Consider the following 262-residue polypeptide: Protein Pcal_0062 (262 aa).

It belongs to the CinA family.

This Pyrobaculum calidifontis (strain DSM 21063 / JCM 11548 / VA1) protein is Protein Pcal_0062.